The sequence spans 720 residues: Biotin biosynthesis bifunctional protein BioWF (720 aa).

Residues Met-1–Ser-39 form a disordered region. The span at Arg-8 to Ser-23 shows a compositional bias: low complexity. Positions Ser-24 to Ser-39 are enriched in basic and acidic residues. Arg-314 is a binding site for substrate. Gly-401–Tyr-402 provides a ligand contact to pyridoxal 5'-phosphate. His-439 serves as a coordination point for substrate. Pyridoxal 5'-phosphate is bound by residues Ser-488, Asp-513 to His-516, and Thr-564 to Lys-567. Lys-567 is modified (N6-(pyridoxal phosphate)lysine). Thr-684 contributes to the substrate binding site.

In the N-terminal section; belongs to the BioW family. The protein in the C-terminal section; belongs to the class-II pyridoxal-phosphate-dependent aminotransferase family. BioF subfamily. As to quaternary structure, homodimer. It depends on Mg(2+) as a cofactor. The cofactor is pyridoxal 5'-phosphate.

It catalyses the reaction heptanedioate + ATP + CoA = 6-carboxyhexanoyl-CoA + AMP + diphosphate. The enzyme catalyses 6-carboxyhexanoyl-[ACP] + L-alanine + H(+) = (8S)-8-amino-7-oxononanoate + holo-[ACP] + CO2. It functions in the pathway metabolic intermediate metabolism; pimeloyl-CoA biosynthesis; pimeloyl-CoA from pimelate: step 1/1. Its pathway is cofactor biosynthesis; biotin biosynthesis. In terms of biological role, catalyzes both the decarboxylative condensation of pimeloyl-[acyl-carrier protein] and L-alanine to produce 8-amino-7-oxononanoate (AON), [acyl-carrier protein], and carbon dioxide, and the transformation of pimelate into pimeloyl-CoA with concomitant hydrolysis of ATP to AMP. This Corynebacterium kroppenstedtii (strain DSM 44385 / JCM 11950 / CIP 105744 / CCUG 35717) protein is Biotin biosynthesis bifunctional protein BioWF (bioWF).